A 310-amino-acid chain; its full sequence is Probable cell division protein WhiA (310 aa).

Positions 274–308 (SLKELGTLVPGGPISKSGINHRLRKINQFAEQLQK) form a DNA-binding region, H-T-H motif.

The protein belongs to the WhiA family.

Functionally, involved in cell division and chromosome segregation. The sequence is that of Probable cell division protein WhiA from Lactiplantibacillus plantarum (strain ATCC BAA-793 / NCIMB 8826 / WCFS1) (Lactobacillus plantarum).